Consider the following 866-residue polypeptide: Protein translocase subunit SecA (866 aa).

Residues Gln-87, 105–109 (GEGKT), and Asp-514 contribute to the ATP site. A disordered region spans residues 819-858 (VSPIGTPSSEGGGETSGADTYSNKKIGRNDPCPCGSGKKY). Residues Cys-850, Cys-852, Cys-861, and Cys-862 each coordinate Zn(2+).

This sequence belongs to the SecA family. In terms of assembly, monomer and homodimer. Part of the essential Sec protein translocation apparatus which comprises SecA, SecYEG and auxiliary proteins SecDF. Other proteins may also be involved. The cofactor is Zn(2+).

The protein localises to the cell inner membrane. It is found in the cytoplasm. It catalyses the reaction ATP + H2O + cellular proteinSide 1 = ADP + phosphate + cellular proteinSide 2.. Its function is as follows. Part of the Sec protein translocase complex. Interacts with the SecYEG preprotein conducting channel. Has a central role in coupling the hydrolysis of ATP to the transfer of proteins into and across the cell membrane, serving as an ATP-driven molecular motor driving the stepwise translocation of polypeptide chains across the membrane. This Elusimicrobium minutum (strain Pei191) protein is Protein translocase subunit SecA.